The following is a 285-amino-acid chain: Phosphatidate cytidylyltransferase (285 aa).

A run of 8 helical transmembrane segments spans residues 10-30, 56-76, 93-113, 121-141, 151-171, 190-210, 213-233, and 264-284; these read FVLI…GFAI, VWLA…LPEY, LGWW…AAIW, LIFG…LRAW, AIWL…AYMF, WQGF…YGMW, LDVA…ASVL, and IDSL…VFRT.

Belongs to the CDS family.

The protein resides in the cell inner membrane. It catalyses the reaction a 1,2-diacyl-sn-glycero-3-phosphate + CTP + H(+) = a CDP-1,2-diacyl-sn-glycerol + diphosphate. Its pathway is phospholipid metabolism; CDP-diacylglycerol biosynthesis; CDP-diacylglycerol from sn-glycerol 3-phosphate: step 3/3. This is Phosphatidate cytidylyltransferase (cdsA) from Escherichia coli O157:H7.